Here is a 233-residue protein sequence, read N- to C-terminus: Probable 2-phosphosulfolactate phosphatase (233 aa).

The protein belongs to the ComB family. Mg(2+) is required as a cofactor.

It carries out the reaction (2R)-O-phospho-3-sulfolactate + H2O = (2R)-3-sulfolactate + phosphate. The chain is Probable 2-phosphosulfolactate phosphatase from Symbiobacterium thermophilum (strain DSM 24528 / JCM 14929 / IAM 14863 / T).